We begin with the raw amino-acid sequence, 609 residues long: MAFSKKTRQEAITKIQNEEMDLLVIGGGITGAGLTLQAAAAGMKVAVLEMQDFSEGTSSRSTKLVHGGIRYLKNFDVEVVSDTVSERAVVQGIAPHIPKPDPMLLPIYDDEGKTTFDMFSVKIAMDLYDRLAGVDEDSPYANYTISPEEVLRREPLIKKKGLQGAGVYLDYRNNDARLVIDNIKKAVEDGAQAISKMKVIDFIYTDGQISGIRARDLLTDQVIEVKAKLVINTSGPWVDKIRYLNFTRPIVPKMRPTKGVHLVVDAAKLPVPQPTYFDTGKHDKRMVFAIPRENKTYFGTTDTDYHGDFTDPKVTQEDVDYLLDVINFRYPEANITINDIEASWAGLRPLLGGNSGSDYNGGDNGAVSETSFNAVVEAVLRYKNKTATKAEVEHLLNNMESSLSEKGDAPSSVSRGSSLERESDGLITLAGGKITDYRKMAAGAMELICQLLEEDFGLKYEPIDSKKYQISGGEFDPTKVEEVVAENMKVGVAAGLTEEEAKYIADFYGMNALQVFAYASEMEAYEGLSLAESARLCYALEDEMILTPVDYLLRRTNHILFMREGVDAIKVHVVNAMADDLGWSAEEKAEQEKALEEALRESDLSDLKK.

Residue 21 to 49 (DLLVIGGGITGAGLTLQAAAAGMKVAVLE) participates in FAD binding.

The protein belongs to the FAD-dependent glycerol-3-phosphate dehydrogenase family. Requires FAD as cofactor.

It is found in the cytoplasm. The enzyme catalyses sn-glycerol 3-phosphate + O2 = dihydroxyacetone phosphate + H2O2. The chain is Alpha-glycerophosphate oxidase (glpO) from Lactococcus lactis subsp. lactis (strain IL1403) (Streptococcus lactis).